The following is a 1446-amino-acid chain: DNA-directed RNA polymerase subunit beta'' (1446 aa).

Cys-217, Cys-285, Cys-292, and Cys-295 together coordinate Zn(2+).

The protein belongs to the RNA polymerase beta' chain family. RpoC2 subfamily. In plastids the minimal PEP RNA polymerase catalytic core is composed of four subunits: alpha, beta, beta', and beta''. When a (nuclear-encoded) sigma factor is associated with the core the holoenzyme is formed, which can initiate transcription. It depends on Zn(2+) as a cofactor.

The protein resides in the plastid. Its subcellular location is the chloroplast. The enzyme catalyses RNA(n) + a ribonucleoside 5'-triphosphate = RNA(n+1) + diphosphate. Its function is as follows. DNA-dependent RNA polymerase catalyzes the transcription of DNA into RNA using the four ribonucleoside triphosphates as substrates. In Thalassiosira pseudonana (Marine diatom), this protein is DNA-directed RNA polymerase subunit beta''.